Here is a 427-residue protein sequence, read N- to C-terminus: 3-phosphoshikimate 1-carboxyvinyltransferase (427 aa).

The 3-phosphoshikimate site is built by Lys-22, Ser-23, and Arg-27. Lys-22 contributes to the phosphoenolpyruvate binding site. Phosphoenolpyruvate-binding residues include Gly-93 and Arg-122. Ser-167, Gln-169, Asp-315, and Lys-342 together coordinate 3-phosphoshikimate. Position 169 (Gln-169) interacts with phosphoenolpyruvate. The Proton acceptor role is filled by Asp-315. Positions 346 and 387 each coordinate phosphoenolpyruvate.

Belongs to the EPSP synthase family. Monomer.

The protein resides in the cytoplasm. The enzyme catalyses 3-phosphoshikimate + phosphoenolpyruvate = 5-O-(1-carboxyvinyl)-3-phosphoshikimate + phosphate. It functions in the pathway metabolic intermediate biosynthesis; chorismate biosynthesis; chorismate from D-erythrose 4-phosphate and phosphoenolpyruvate: step 6/7. Its function is as follows. Catalyzes the transfer of the enolpyruvyl moiety of phosphoenolpyruvate (PEP) to the 5-hydroxyl of shikimate-3-phosphate (S3P) to produce enolpyruvyl shikimate-3-phosphate and inorganic phosphate. In Thermus thermophilus (strain ATCC 27634 / DSM 579 / HB8), this protein is 3-phosphoshikimate 1-carboxyvinyltransferase.